The primary structure comprises 1155 residues: MSDAEEAPREATRENGETEMKEEEEPNPNYKEVEDPQQESKDDTLAWRESQEEERKTGEEEGEEEEEKEEEGKKDKKIVMEETEEKAGESQEKEASGIQEETTVEPQEVTESMIRLETQITDSQSVTSGIFPKTQRGSKSKLSLQLEDAETDELLRDLSTQLEFLDLDQISPEEQQISSPERQPSGELEEKTDQMPQDELGQERRDLEPENREEGQERTVSDIQSKAGISRESLVSSTTEDILFQKDKSAPVYPLTMTWSFGWNSSLPVYYIREEKQRVLLYVCAHTAIIYNVFRNNQYHLQGHANIISCLCVSEDRRWIATADKGPDCLVIIWDSFTGIPVHTIFDSCPEGSGIRAMAMTHDAKYLATISDAEVQKVCIWKWTLAVETPACTLELPTEYGVQNYVTFNPTNNKELVSNSKTWAIYYAWYEERDTLAHSAPLLTEKTFNKLVGKFSQSVFHLNLTQILSATMEGKLVVWDIHRPPSSASTFLGFPYIKPCKLVHLQKEGITVLTTTDSYIVTGDIKGNIKFYDHTLSIVNWYSHLKLGAIRTLSFSKTPATPPTEKSNYPPDCTLKGDLFVLRNFIIGTSDAAVYHLTTDGTKLEKLFVEPKDAICAISCHPYQPLIAIGSICGMIKVWNYENKQYLFSRVFEKGLGVQSLTYNPEGALLGAGFTEGTVYILDAMSLENESPEPFKYSRTSVTHISFSHDSQYMATADRSFTVAVYMLVVRNGQRVWEYLARLRSHRKSIRSLLFGVYLDSNEPRLLSLGTDRLLIGYDLLRSYKDCLEVLDIHHTDQGCYPTCMVWYPPLTRELFLLICNSGYKVKLFNATTKMCRKTLLGPAYGSPIEQTQVLPVRSMAELQKRYLVFINRDKVGLQILPVDGNPHKTSAIVCHPNGVAGMAVSYDGHYAFTAGGHDRSVVQWKITLSVLEAAVSLGGEDLTPFYGLLSGGREGKFYRELEDYFYYSQLRSQGIDTMETRKVSEHICLSELPFVMRAIGFYPSEEKIDDIFNEIKFGEYVDTGKLIDKINLPDFLKVYLNHKPPFGNTMSGIHKSFEVLGYTNSKGKKAIRREDFLRLLVTKGEHMTEEEMLDCFASLFGLNPEGWKSEPATSSVKGSEICLEEELPDEITAEIFATEILGLTISEYSSQDGQ.

2 stretches are compositionally biased toward basic and acidic residues: residues 1–19 and 31–59; these read MSDAEEAPREATRENGETE and KEVEDPQQESKDDTLAWRESQEEERKTGE. Disordered stretches follow at residues 1–144 and 167–225; these read MSDA…KLSL and LDQI…DIQS. Residues 60–69 are compositionally biased toward acidic residues; sequence EEGEEEEEKE. Basic and acidic residues predominate over residues 70–95; it reads EEGKKDKKIVMEETEEKAGESQEKEA. Residues 99–111 show a composition bias toward low complexity; it reads QEETTVEPQEVTE. 2 stretches are compositionally biased toward polar residues: residues 118-128 and 172-182; these read TQITDSQSVTS and PEEQQISSPER. Basic and acidic residues predominate over residues 201-220; the sequence is GQERRDLEPENREEGQERTV. 14 WD repeats span residues 341–383, 391–431, 442–481, 499–534, 537–597, 601–641, 647–684, 694–730, 737–780, 791–831, 837–883, 889–927, 965–1005, and 1025–1065; these read PVHT…IWKW, ACTL…AWYE, LLTEKTFNKLVGKFSQSVFHLNLTQILSATMEGKLVVWDI, PCKLVHLQKEGITVLTTTDSYIVTGDIKGNIKFYDH, SIVN…VYHL, GTKL…VWNY, LFSRVFEKGLGVQSLTYNPEGALLGAGFTEGTVYILDA, PFKYSRTSVTHISFSHDSQYMATADRSFTVAVYMLVV, WEYL…GYDL, LDIH…LFNA, RKTL…ILPV, KTSAIVCHPNGVAGMAVSYDGHYAFTAGGHDRSVVQWKI, YFYY…FYPS, and GKLI…GYTN.

The protein resides in the cytoplasm. Its subcellular location is the cytoskeleton. It is found in the cilium axoneme. It localises to the cell projection. The protein localises to the cilium. The protein resides in the flagellum. Involved in spermatozoa motility. May also regulate cilium motility through its role in the assembly of the axonemal radial spokes. This Pongo abelii (Sumatran orangutan) protein is Cilia- and flagella-associated protein 251.